A 416-amino-acid chain; its full sequence is Phosphoglycerate kinase 2 (416 aa).

Substrate is bound by residues 28-30 (DMN), Arg-44, 65-68 (HQSR), Arg-122, and Arg-162. ATP contacts are provided by residues Glu-337 and 362 to 365 (GGHI).

Belongs to the phosphoglycerate kinase family. As to quaternary structure, monomer.

It is found in the cytoplasm. The enzyme catalyses (2R)-3-phosphoglycerate + ATP = (2R)-3-phospho-glyceroyl phosphate + ADP. It functions in the pathway carbohydrate degradation; glycolysis; pyruvate from D-glyceraldehyde 3-phosphate: step 2/5. This chain is Phosphoglycerate kinase 2, found in Methanosarcina acetivorans (strain ATCC 35395 / DSM 2834 / JCM 12185 / C2A).